The following is a 653-amino-acid chain: Beta-galactosidase-1-like protein 3 (653 aa).

Glu227 (proton donor) is an active-site residue. Glu301 serves as the catalytic Nucleophile.

This sequence belongs to the glycosyl hydrolase 35 family.

The chain is Beta-galactosidase-1-like protein 3 (GLB1L3) from Homo sapiens (Human).